Here is an 865-residue protein sequence, read N- to C-terminus: Leucine--tRNA ligase (865 aa).

The 'HIGH' region motif lies at 48-58 (PYPSGQLHVGH). The short motif at 626–630 (KMSKS) is the 'KMSKS' region element. Lys-629 lines the ATP pocket.

The protein belongs to the class-I aminoacyl-tRNA synthetase family.

Its subcellular location is the cytoplasm. The enzyme catalyses tRNA(Leu) + L-leucine + ATP = L-leucyl-tRNA(Leu) + AMP + diphosphate. The chain is Leucine--tRNA ligase from Gluconobacter oxydans (strain 621H) (Gluconobacter suboxydans).